Reading from the N-terminus, the 342-residue chain is 4-hydroxy-2-oxovalerate aldolase 2 (342 aa).

A Pyruvate carboxyltransferase domain is found at I8–Q260. R16–D17 contributes to the substrate binding site. A Mn(2+)-binding site is contributed by D17. The active-site Proton acceptor is H20. The substrate site is built by S170 and H199. Mn(2+) is bound by residues H199 and H201. Position 290 (Y290) interacts with substrate.

Belongs to the 4-hydroxy-2-oxovalerate aldolase family.

It carries out the reaction (S)-4-hydroxy-2-oxopentanoate = acetaldehyde + pyruvate. This Azoarcus sp. (strain BH72) protein is 4-hydroxy-2-oxovalerate aldolase 2 (mhpE).